The chain runs to 413 residues: Tyrosine--tRNA ligase (413 aa).

The 'HIGH' region signature appears at 59-68; sequence PTAPDIHLGH. Positions 243 to 247 match the 'KMSKS' region motif; the sequence is KMSKS. Lys-246 is an ATP binding site. The S4 RNA-binding domain maps to 351–411; that stretch reads LAIGQLLKQA…GKRRFARVTL (61 aa).

Belongs to the class-I aminoacyl-tRNA synthetase family. TyrS type 2 subfamily. As to quaternary structure, homodimer.

It localises to the cytoplasm. The catalysed reaction is tRNA(Tyr) + L-tyrosine + ATP = L-tyrosyl-tRNA(Tyr) + AMP + diphosphate + H(+). Functionally, catalyzes the attachment of tyrosine to tRNA(Tyr) in a two-step reaction: tyrosine is first activated by ATP to form Tyr-AMP and then transferred to the acceptor end of tRNA(Tyr). In Burkholderia pseudomallei (strain K96243), this protein is Tyrosine--tRNA ligase.